We begin with the raw amino-acid sequence, 267 residues long: Translation initiation factor 2 subunit alpha (267 aa).

An S1 motif domain is found at 12–83 (GEYVIATVKE…RRKTVDVSLK (72 aa)).

It belongs to the eIF-2-alpha family. As to quaternary structure, heterotrimer composed of an alpha, a beta and a gamma chain.

EIF-2 functions in the early steps of protein synthesis by forming a ternary complex with GTP and initiator tRNA. The protein is Translation initiation factor 2 subunit alpha of Staphylothermus marinus (strain ATCC 43588 / DSM 3639 / JCM 9404 / F1).